The sequence spans 360 residues: 3-isopropylmalate dehydrogenase (360 aa).

NAD(+) is bound at residue 76–89 (GPKWDTIERDIRPE). Arginine 96, arginine 106, arginine 134, and aspartate 224 together coordinate substrate. Mg(2+)-binding residues include aspartate 224, aspartate 248, and aspartate 252. NAD(+) is bound at residue 282–294 (GSAPDIAGKGIAN).

This sequence belongs to the isocitrate and isopropylmalate dehydrogenases family. LeuB type 1 subfamily. In terms of assembly, homodimer. Requires Mg(2+) as cofactor. The cofactor is Mn(2+).

It localises to the cytoplasm. It catalyses the reaction (2R,3S)-3-isopropylmalate + NAD(+) = 4-methyl-2-oxopentanoate + CO2 + NADH. The protein operates within amino-acid biosynthesis; L-leucine biosynthesis; L-leucine from 3-methyl-2-oxobutanoate: step 3/4. Catalyzes the oxidation of 3-carboxy-2-hydroxy-4-methylpentanoate (3-isopropylmalate) to 3-carboxy-4-methyl-2-oxopentanoate. The product decarboxylates to 4-methyl-2 oxopentanoate. The chain is 3-isopropylmalate dehydrogenase from Pseudomonas savastanoi pv. phaseolicola (strain 1448A / Race 6) (Pseudomonas syringae pv. phaseolicola (strain 1448A / Race 6)).